Reading from the N-terminus, the 255-residue chain is MRPRLALLSGIGALALLAGCAETKDARPRPKPAELGVAVLQSDAGAPDKKTLTRGRISTKSGEILILEPDGSVSEMALDSPEGRDAFAVTEAELMALNANLELDLSGLPNMAPVRKREPTAQEKALAAFSARSRPLRLNLPVSFEADPQDFQGAQVAALASSRKGADSLVEVTANLRGGVDADTAFAYATCALASWADAKGASYARHIRTLRDKRNGKMVVGSVFTLSEKKPMGLTVMTTKQTLQECKARGIPAA.

This is an uncharacterized protein from Paracoccus denitrificans.